The sequence spans 393 residues: Glucose-1-phosphate adenylyltransferase (393 aa).

Alpha-D-glucose 1-phosphate is bound by residues Tyr105, Gly170, 185-186 (EK), and Ser196.

This sequence belongs to the bacterial/plant glucose-1-phosphate adenylyltransferase family. As to quaternary structure, homotetramer.

It catalyses the reaction alpha-D-glucose 1-phosphate + ATP + H(+) = ADP-alpha-D-glucose + diphosphate. The protein operates within glycan biosynthesis; glycogen biosynthesis. Its function is as follows. Involved in the biosynthesis of ADP-glucose, a building block required for the elongation reactions to produce glycogen. Catalyzes the reaction between ATP and alpha-D-glucose 1-phosphate (G1P) to produce pyrophosphate and ADP-Glc. This Clostridium perfringens (strain 13 / Type A) protein is Glucose-1-phosphate adenylyltransferase.